Here is a 453-residue protein sequence, read N- to C-terminus: Tryptophan biosynthesis protein TrpCF (453 aa).

The indole-3-glycerol phosphate synthase stretch occupies residues 1 to 257; it reads MQDTTLKKII…TAVRSIIFGD (257 aa). The N-(5'-phosphoribosyl)anthranilate isomerase stretch occupies residues 258–453; the sequence is NKVCGLTRSI…KSIFQKLRYG (196 aa).

It in the N-terminal section; belongs to the TrpC family. In the C-terminal section; belongs to the TrpF family. In terms of assembly, monomer.

The enzyme catalyses N-(5-phospho-beta-D-ribosyl)anthranilate = 1-(2-carboxyphenylamino)-1-deoxy-D-ribulose 5-phosphate. It catalyses the reaction 1-(2-carboxyphenylamino)-1-deoxy-D-ribulose 5-phosphate + H(+) = (1S,2R)-1-C-(indol-3-yl)glycerol 3-phosphate + CO2 + H2O. The protein operates within amino-acid biosynthesis; L-tryptophan biosynthesis; L-tryptophan from chorismate: step 3/5. It participates in amino-acid biosynthesis; L-tryptophan biosynthesis; L-tryptophan from chorismate: step 4/5. Bifunctional enzyme that catalyzes two sequential steps of tryptophan biosynthetic pathway. The first reaction is catalyzed by the isomerase, coded by the TrpF domain; the second reaction is catalyzed by the synthase, coded by the TrpC domain. This chain is Tryptophan biosynthesis protein TrpCF (trpC), found in Buchnera aphidicola subsp. Acyrthosiphon pisum (strain APS) (Acyrthosiphon pisum symbiotic bacterium).